A 201-amino-acid chain; its full sequence is dTTP/UTP pyrophosphatase (201 aa).

Aspartate 73 serves as the catalytic Proton acceptor.

Belongs to the Maf family. YhdE subfamily. The cofactor is a divalent metal cation.

It localises to the cytoplasm. It carries out the reaction dTTP + H2O = dTMP + diphosphate + H(+). It catalyses the reaction UTP + H2O = UMP + diphosphate + H(+). In terms of biological role, nucleoside triphosphate pyrophosphatase that hydrolyzes dTTP and UTP. May have a dual role in cell division arrest and in preventing the incorporation of modified nucleotides into cellular nucleic acids. The polypeptide is dTTP/UTP pyrophosphatase (Pseudomonas aeruginosa (strain ATCC 15692 / DSM 22644 / CIP 104116 / JCM 14847 / LMG 12228 / 1C / PRS 101 / PAO1)).